We begin with the raw amino-acid sequence, 205 residues long: Glycerol-3-phosphate acyltransferase (205 aa).

5 helical membrane-spanning segments follow: residues 13–33 (LLAL…GLIL), 68–88 (LLLD…LWGY), 90–110 (ASLV…WLGF), 120–140 (IGVL…IWLA), and 147–167 (YSSL…WVLG).

This sequence belongs to the PlsY family. Probably interacts with PlsX.

The protein resides in the cell inner membrane. The catalysed reaction is an acyl phosphate + sn-glycerol 3-phosphate = a 1-acyl-sn-glycero-3-phosphate + phosphate. The protein operates within lipid metabolism; phospholipid metabolism. Functionally, catalyzes the transfer of an acyl group from acyl-phosphate (acyl-PO(4)) to glycerol-3-phosphate (G3P) to form lysophosphatidic acid (LPA). This enzyme utilizes acyl-phosphate as fatty acyl donor, but not acyl-CoA or acyl-ACP. The protein is Glycerol-3-phosphate acyltransferase of Agrobacterium fabrum (strain C58 / ATCC 33970) (Agrobacterium tumefaciens (strain C58)).